The primary structure comprises 428 residues: Trigger factor (428 aa).

The PPIase FKBP-type domain occupies Gly163–Pro248.

The protein belongs to the FKBP-type PPIase family. Tig subfamily.

The protein localises to the cytoplasm. The enzyme catalyses [protein]-peptidylproline (omega=180) = [protein]-peptidylproline (omega=0). Its function is as follows. Involved in protein export. Acts as a chaperone by maintaining the newly synthesized protein in an open conformation. Functions as a peptidyl-prolyl cis-trans isomerase. The chain is Trigger factor from Oceanobacillus iheyensis (strain DSM 14371 / CIP 107618 / JCM 11309 / KCTC 3954 / HTE831).